Here is a 57-residue protein sequence, read N- to C-terminus: Small hydrophobic protein (57 aa).

Over 1–8 the chain is Virion surface; the sequence is MPAIQPPL. A helical membrane pass occupies residues 9–29; that stretch reads YLTFLLLILLYRIITLYVWVV. Over 30-57 the chain is Intravirion; the sequence is STITYKTAVRHAALYQRSLFRWSFDHSL.

The protein belongs to the rubulavirus small hydrophobic protein family. As to quaternary structure, interacts with host TNFRSF1A, RIPK1 and IRAK1; these interactions interfere with host NF-kappa-B activation at the level of receptor complexes. Interacts with host protein UBQLN4.

Its subcellular location is the virion membrane. The protein localises to the host cell membrane. Plays a role in the inhibition of the host NF-kappa-B pathway. This inhibition occurs at the receptor level, by preventing the signaling of TNFR1 as well as IL-1R and TLR3. The chain is Small hydrophobic protein (SH) from Mumps virus (strain Belfast) (MuV).